Here is an 84-residue protein sequence, read N- to C-terminus: Small ribosomal subunit protein bS20 (84 aa).

Belongs to the bacterial ribosomal protein bS20 family.

Binds directly to 16S ribosomal RNA. This chain is Small ribosomal subunit protein bS20, found in Porphyromonas gingivalis (strain ATCC 33277 / DSM 20709 / CIP 103683 / JCM 12257 / NCTC 11834 / 2561).